Consider the following 1349-residue polypeptide: ABC multidrug transporter mdr1 (1349 aa).

Residues 1-62 (MPAPETGASS…PDGKQKDHGK (62 aa)) are disordered. Residues 35–45 (DNEKPHDHHSL) are compositionally biased toward basic and acidic residues. 4 helical membrane passes run 108 to 128 (ILII…LPLF), 162 to 182 (YFVY…VGFI), 234 to 254 (KVGL…VAYV), and 257 to 277 (WKLA…MGGG). The region spanning 112-402 (LVSAICAIAA…VAPNGQAFTN (291 aa)) is the ABC transmembrane type-1 1 domain. A glycan (N-linked (GlcNAc...) asparagine) is linked at N308. 2 helical membrane-spanning segments follow: residues 339–359 (ILGM…GLGF) and 371–391 (VNVG…FSLG). The 246-residue stretch at 437 to 682 (IEFRNVKHIY…KGTYYKLVEA (246 aa)) folds into the ABC transporter 1 domain. 472-479 (GPSGSGKS) is a binding site for ATP. The next 2 membrane-spanning stretches (helical) occupy residues 779–799 (MLIG…QAFL) and 828–848 (FFVV…AFAI). An ABC transmembrane type-1 2 domain is found at 780-1069 (LIGLTFSFLA…VFSFAPDMGK (290 aa)). Residues N878 and N893 are each glycosylated (N-linked (GlcNAc...) asparagine). Helical transmembrane passes span 896–916 (GVSG…GAAM), 926–948 (LALV…FYML), 1016–1036 (ALVF…LGHH), and 1043–1063 (FFVC…VFSF). Residues 1104–1342 (IEFRDVHFRY…KGRYYELVNL (239 aa)) enclose the ABC transporter 2 domain. An N-linked (GlcNAc...) asparagine glycan is attached at N1126. ATP is bound at residue 1139–1146 (GPSGCGKS).

Belongs to the ABC transporter superfamily. ABCB family. Multidrug resistance exporter (TC 3.A.1.201) subfamily.

It is found in the cell membrane. The catalysed reaction is voriconazole(in) + ATP + H2O = voriconazole(out) + ADP + phosphate + H(+). Pleiotropic ABC efflux transporter that may be involved in A.fumigatus adaptation to azoles such as vorizonazole. The sequence is that of ABC multidrug transporter mdr1 from Aspergillus fumigatus (strain ATCC MYA-4609 / CBS 101355 / FGSC A1100 / Af293) (Neosartorya fumigata).